The sequence spans 252 residues: Trans-aconitate 2-methyltransferase (252 aa).

It belongs to the methyltransferase superfamily. Tam family.

The protein localises to the cytoplasm. It catalyses the reaction trans-aconitate + S-adenosyl-L-methionine = (E)-3-(methoxycarbonyl)pent-2-enedioate + S-adenosyl-L-homocysteine. Its function is as follows. Catalyzes the S-adenosylmethionine monomethyl esterification of trans-aconitate. The polypeptide is Trans-aconitate 2-methyltransferase (Escherichia coli O17:K52:H18 (strain UMN026 / ExPEC)).